Here is a 623-residue protein sequence, read N- to C-terminus: Pyranose 2-oxidase (623 aa).

Residues 1-28 (MSTSSSDPFFNFAKSSFRSAAAQKASAS) form the signal peptide. A propeptide spanning residues 29 to 38 (SLPPLPGPDK) is cleaved from the precursor. The residue at position 167 (H167) is a Tele-8alpha-FAD histidine. Substrate is bound by residues Q448 and H450. H548 functions as the Proton acceptor in the catalytic mechanism. N593 is a catalytic residue.

The protein belongs to the GMC oxidoreductase family. In terms of assembly, homotetramer. The cofactor is FAD.

Its subcellular location is the periplasm. It catalyses the reaction D-glucose + O2 = 2-dehydro-D-glucose + H2O2. Functionally, catalyzes the oxidation of various aldopyranoses and disaccharides on carbon-2 to the corresponding 2-keto sugars concomitant with the reduction of O(2) to H(2)O(2). Plays an important role in lignin degradation of wood rot fungi by supplying the essential cosubstrate H(2)O(2) for the ligninolytic peroxidases, lignin peroxidase and manganese-dependent peroxidase. The chain is Pyranose 2-oxidase (p2ox) from Peniophora sp. (strain SG) (White-rot fungus).